The following is a 404-amino-acid chain: Protein IQ-DOMAIN 12 (404 aa).

A calmodulin-binding region spans residues 8–25 (FGWMKRLFICEAKARAEK). Positions 11-18 (MKRLFICE) match the Nuclear localization signal 1 motif. 2 consecutive IQ domains span residues 108 to 135 (NVAAIKIQSAFRASLARKALRALKALVR) and 136 to 158 (LQAIVRGRAVRRKVSALLKSSHS). The short motif at 226–233 (IKRDRMLK) is the Nuclear localization signal 2 element.

This sequence belongs to the IQD family. As to quaternary structure, binds to multiple calmodulin (CaM) in the presence of Ca(2+) and CaM-like proteins.

It is found in the nucleus. It localises to the cell membrane. Its function is as follows. May be involved in cooperative interactions with calmodulins or calmodulin-like proteins. Recruits calmodulin proteins to microtubules, thus being a potential scaffold in cellular signaling and trafficking. May associate with nucleic acids and regulate gene expression at the transcriptional or post-transcriptional level. In Arabidopsis thaliana (Mouse-ear cress), this protein is Protein IQ-DOMAIN 12.